A 681-amino-acid chain; its full sequence is Pumilio domain-containing protein C6G9.14 (681 aa).

2 disordered regions span residues 180–210 (RPGLSSYTPGPSTSRRSISSSSNLGGNPGLI) and 273–322 (ASTA…NVPS). Low complexity-rich tracts occupy residues 187 to 210 (TPGPSTSRRSISSSSNLGGNPGLI) and 273 to 286 (ASTASTGSTDSSGS). One can recognise a PUM-HD domain in the interval 319-659 (NVPSLISDDP…RILSKLERRH (341 aa)). Pumilio repeat units lie at residues 342–378 (SLQNSNILSFCKDQHGCRYLQRLLEKKNQSHIDAVFA), 379–414 (ETHPYLAVLMVDAFGNYLCQKLFEHASEAQRSTFIQ), 415–451 (IIAPKLVPISFNMHGTRALQKIIDLVSSPDQISCIVN), 452–487 (ALRPNVVLLTKDLNGNHVIQKCLNKFSQEDCQFIFD), 488–523 (AICEDPLDVSTHRHGCCVVQRCFDHASPAQIEQLVE), 524–559 (HIVPHALTLVQDAFGNYVLQYVLELNNPNHTEAIIS), 560–595 (YFLYKVRALSTQKFSSNVMEKCIFFAPAAIKEKLIS), and 596–633 (ELMDEKHLPKLLRDSFANYVIQTALDNASVKQRAELVE). Over residues 656–666 (ERRHPSSKEKP) the composition is skewed to basic and acidic residues. The segment at 656–681 (ERRHPSSKEKPIVYSNSERVNTSSSA) is disordered. The span at 669-681 (YSNSERVNTSSSA) shows a compositional bias: polar residues.

The sequence is that of Pumilio domain-containing protein C6G9.14 from Schizosaccharomyces pombe (strain 972 / ATCC 24843) (Fission yeast).